A 63-amino-acid polypeptide reads, in one-letter code: Large ribosomal subunit protein bL28c (63 aa).

Belongs to the bacterial ribosomal protein bL28 family.

It localises to the plastid. Its subcellular location is the chloroplast. The polypeptide is Large ribosomal subunit protein bL28c (Pyropia yezoensis (Susabi-nori)).